The chain runs to 569 residues: Membrane protein insertase YidC (569 aa).

Residues 6-26 form a helical membrane-spanning segment; it reads FVLFLIFATSLLFLWDAWQKE. 2 stretches are compositionally biased toward polar residues: residues 32 to 52 and 62 to 74; these read QGPKTAVQGTETQANTGTAGT and LASSVPQRGSTAE. The disordered stretch occupies residues 32 to 81; it reads QGPKTAVQGTETQANTGTAGTAETPVPGDQLASSVPQRGSTAENGAPVRA. 5 helical membrane passes run 348–368, 375–395, 442–462, 479–499, and 519–539; these read VVDYGWLTVIGAPLFWLLSLF, WGVAIILLTMSVKLAFFPLSA, GGCLPILVQIPVFISLYWVLL, LSAPDPYYVLPVIMGISMFLQ, and PLAFSVFFFFFPAGLVLYSLV.

The protein belongs to the OXA1/ALB3/YidC family. Type 1 subfamily. In terms of assembly, interacts with the Sec translocase complex via SecD. Specifically interacts with transmembrane segments of nascent integral membrane proteins during membrane integration.

It localises to the cell inner membrane. Functionally, required for the insertion and/or proper folding and/or complex formation of integral membrane proteins into the membrane. Involved in integration of membrane proteins that insert both dependently and independently of the Sec translocase complex, as well as at least some lipoproteins. Aids folding of multispanning membrane proteins. The chain is Membrane protein insertase YidC from Nitrosospira multiformis (strain ATCC 25196 / NCIMB 11849 / C 71).